We begin with the raw amino-acid sequence, 994 residues long: MLKQQFHENLEVQHVNLLPRRAFYIPYQQGEADYHFETRYNTRNATLLNGEWYFQYFESLEAYLNHSNKQESKTLTVPSVWNLYGYDQIQYLNTQYPIPFNPPYVPKDNPCGHYTRKFTIDEYDQQYDYHLNFEGVDSAFYVWINNEFIGYSQISHAISEFDISNFVKQGENNIEVLVLKYSDGTYLEDQDMFRHSGIFRDVYILKRATERVDDFKVETNLSDDLNAAQIDVKIERAHNLKSVEFQLYNPKGEEVASISGVNEHQFDVHNPHLWSTENPVLYTLYILTDQEVITQKVGIREVAIQNNQFYINGQSIKIRGTNYHDSHPETGYVMTESHFKKDLELMKQGNFNAIRTAHYPKSPLFYEMTDQYGFYVMSEADIETHGVVRLYGEDNNEDFNIIADDSKFETAIIERIEASIMPLKNYSSIVSWSLGNESGFGKNMVKGAARAKSLDNTRPIHYEGTLYRDKQQHYDLSNIDMISRMYPSPEEIEETYLSNPDLDKPFILCEYAHAMGNSPGDLHAYQTLVEQYDSFIGGFVWEWCDHAIQTGMKDGNPIFRYGGDFGEKLHDGNFCVDGIVFPNRVPHEGYYEFKQEHRPLNLVSQEDFKIVLRNQLDFIPAEKYMFVEATVTNLNGGKTISEIPLSNFLPHTAQTIDLSDYINIQHISDVILRYKLKYDDIFRHENFELGHDQIVYQRRTLKEQNEQSDETEILVTQTDKLIKVSVGKSETYVFNKDNASLESVLKHNHIVISQNTTNNIWRAPTDNDTNIKNDWAYSGYKDITTRVHDYQIVENETEVSLIFNIAMVNDAVPPVLFGTVTWHVQRNGTLNVTYDLERDMKAPYLPRFGLGLTLPKAFEQVKYYGKGPFSSYQDKGVANYLDDFGTTVTDNGEIHIRPQETGSHNETTFVEISDGCKKVIVTSDNTFSFNTTHYSLKQLTETTHKDALEPEDQTYLYIDYAQSGIGSNSCGPELNEAYRLNNRHIEFSFNLKFV.

Catalysis depends on Glu437, which acts as the Proton donor. Glu510 acts as the Nucleophile in catalysis.

This sequence belongs to the glycosyl hydrolase 2 family.

The enzyme catalyses Hydrolysis of terminal non-reducing beta-D-galactose residues in beta-D-galactosides.. This is Beta-galactosidase (lacZ) from Staphylococcus xylosus.